The following is a 66-amino-acid chain: MQNGKVKWFNNEKGFGFIEVEGGDDVFVHFTAIEGDGYKSLEEGQEVSFEIVEGNRGPQASNVVKL.

One can recognise a CSD domain in the interval 4–63 (GKVKWFNNEKGFGFIEVEGGDDVFVHFTAIEGDGYKSLEEGQEVSFEIVEGNRGPQASNV).

It is found in the cytoplasm. The chain is Cold shock protein CspD (cspD) from Bacillus subtilis (strain 168).